A 585-amino-acid polypeptide reads, in one-letter code: MASPGSGFWSFGSEDGSGDPENPSTARAWCQVAQKFTGGIGNKLCALLYGDAEKPAESGGSEPPRATSRKAACACNQKPCSCPKAEVNYAFLHATDLLPACDGERPTLAFLQDVMDILLQYVVKSFDRSTKVIDFHYPNELLQEYNWELADQPQNLEEILMHCQTTLKYAIKTGHPRYFNQLSTGLDMVGLAADWLTSTANTNMFTYEIAPVFVLLEYVTLKKMREIIGWPGGSGDGIFSPGGAISNMYAMLIARFKMFPEVKEKGMAAVPRLIAFTSEHSHFSLKKGAAALGIGTDSVILIKCDERGKMVPSDLERRILEAKQKGFVPFLVSATAGTTVYGAFDPLLAVADICKKYKIWMHVDAAWGGGLLMSRKHKWKLSGVERANSVTWNPHKMMGVPLQCSALLVREEGLMQSCNQMHASYLFQQDKHYDLSYDTGDKALQCGRHVDVFKLWLMWRAKGTTGFEAHIDKCLELAEYLYSIIKNREGYEMVFDGKPQHTNVCFWYVPPSLRVLEDNEERMNRLSKVAPVIKARMMEYGTTMVSYQPLGDKVNFFRMVISNPAATHQDIDFLIEEIERLGQDL.

The segment at 1–25 (MASPGSGFWSFGSEDGSGDPENPST) is disordered. A phosphoserine mark is found at S3, S6, S10, and S13. Residues C30 and C45 are each lipidated (S-palmitoyl cysteine). 181–183 (QLS) is a binding site for substrate. N6-(pyridoxal phosphate)lysine is present on K396. R558 provides a ligand contact to substrate.

The protein belongs to the group II decarboxylase family. In terms of assembly, homodimer. Pyridoxal 5'-phosphate serves as cofactor. In terms of processing, phosphorylated; which does not affect kinetic parameters or subcellular location. Post-translationally, palmitoylated; which is required for presynaptic clustering.

The protein localises to the cytoplasm. Its subcellular location is the cytosol. The protein resides in the cytoplasmic vesicle. It is found in the presynaptic cell membrane. It localises to the golgi apparatus membrane. The catalysed reaction is L-glutamate + H(+) = 4-aminobutanoate + CO2. Functionally, catalyzes the production of GABA. In Canis lupus familiaris (Dog), this protein is Glutamate decarboxylase 2 (GAD2).